A 221-amino-acid polypeptide reads, in one-letter code: uncharacterized protein (221 aa).

A DNA-binding region (H-T-H motif) is located at residues 77–96; sequence YRERAVELGVPERAILVEPN.

The protein to E.coli YdcF.

The imp locus inhibits the extrachromosomal maintenance of the streptomyces plasmid SLP1. May function as a transcriptional activator. This is an uncharacterized protein from Streptomyces coelicolor (strain ATCC BAA-471 / A3(2) / M145).